We begin with the raw amino-acid sequence, 444 residues long: Aspartate--tRNA(Asp/Asn) ligase (444 aa).

Position 176 (Glu176) interacts with L-aspartate. Residues 198 to 201 (QLFK) form an aspartate region. Arg220 provides a ligand contact to L-aspartate. Residues 220-222 (RAE), 228-230 (RHL), and Glu367 each bind ATP. Positions 367 and 370 each coordinate Mg(2+). L-aspartate is bound by residues Ser370 and Arg374. 415-418 (GCER) contributes to the ATP binding site.

It belongs to the class-II aminoacyl-tRNA synthetase family. Type 2 subfamily. As to quaternary structure, homodimer. Mg(2+) is required as a cofactor.

The protein localises to the cytoplasm. The enzyme catalyses tRNA(Asx) + L-aspartate + ATP = L-aspartyl-tRNA(Asx) + AMP + diphosphate. Its function is as follows. Aspartyl-tRNA synthetase with relaxed tRNA specificity since it is able to aspartylate not only its cognate tRNA(Asp) but also tRNA(Asn). Reaction proceeds in two steps: L-aspartate is first activated by ATP to form Asp-AMP and then transferred to the acceptor end of tRNA(Asp/Asn). This chain is Aspartate--tRNA(Asp/Asn) ligase, found in Methanosarcina barkeri (strain Fusaro / DSM 804).